A 656-amino-acid polypeptide reads, in one-letter code: Anion exchange transporter (656 aa).

Residues 1–75 (MTGAKRKKRS…LSFAMLSSVH (75 aa)) lie on the Cytoplasmic side of the membrane. Residues 76 to 96 (PVFGLYGSLFPAIIYAIFGMG) form a helical membrane-spanning segment. Residues 97–144 (RHVATGTFALTSLISANAVERLVPQSSRNLTTQSNSSVLGLSEFELQR) are Extracellular-facing. A helical membrane pass occupies residues 145 to 165 (IGVAAAVSFLGGVIQLVMFVL). Q166 is a topological domain (cytoplasmic). The chain crosses the membrane as a helical span at residues 167–187 (LGSATFLLTEPVISAMTTGAA). The Extracellular portion of the chain corresponds to 188-199 (THVVTSQVKYLL). A helical transmembrane segment spans residues 200–220 (GIKMPYISGPLGFFYIYAYVF). At 221-222 (EN) the chain is on the cytoplasmic side. Residues 223 to 243 (IKSVQLEALLFSLLSIIVLVL) traverse the membrane as a helical segment. The Extracellular segment spans residues 244–254 (VKELNEQFKRK). The chain crosses the membrane as a helical span at residues 255 to 275 (IKVVLPVDLVLIIAASFACYC). Residues 276–306 (TNMENTYGLEVVGHIPNGIPPPRAPPMNILS) lie on the Cytoplasmic side of the membrane. Residues 307–327 (AVLTEAFGVALVGYVASLALA) form a helical membrane-spanning segment. The Extracellular segment spans residues 328-343 (QGSAKKFKYSVDDNQE). Residues 344-364 (FLAHGLSNVIPSFLFCIPSAA) form a helical membrane-spanning segment. At 365-383 (AMGRTAGLYSTGAKTQVAC) the chain is on the cytoplasmic side. 2 helical membrane-spanning segments follow: residues 384-404 (LISCIFVLIVIYAIGPLLYWL) and 405-425 (PMCVLASIIVVGLKGMLIQFR). The Extracellular segment spans residues 426–448 (DLKKYWNVDKIDWGIWISTYIFT). A helical transmembrane segment spans residues 449 to 469 (ICFAANVGLLFGVICTIAIVL). The Cytoplasmic segment spans residues 470-656 (GRFPRAKTLS…LSKASDHSEV (187 aa)). The 150-residue stretch at 492–641 (TEMHDETSQQ…DSVPAAISII (150 aa)) folds into the STAS domain. Positions 641–656 (IQSNKNLSKASDHSEV) are membrane targeting.

It belongs to the SLC26A/SulP transporter (TC 2.A.53) family. In terms of tissue distribution, expressed in the Reissner's membrane epithelial cells in the cochlea (at protein level). Expressed in the retinal pigment epithelium (at protein level). Abundantly expressed in parietal cells on the glandular portion of the stomach. Lower levels are observed in the kidney, with expression in the proximal tubule and thick ascending limb of the loop of Henle. Also expressed in distal segments of nephron, in extraglomerular mesagial cells and a subpopulation of intercalated cells of outer medullary collecting ducts. Expressed in the thyroid gland.

It localises to the basolateral cell membrane. It is found in the recycling endosome membrane. The protein resides in the apical cell membrane. The protein localises to the lateral cell membrane. The enzyme catalyses chloride(in) = chloride(out). It carries out the reaction iodide(out) = iodide(in). It catalyses the reaction bromide(in) = bromide(out). The catalysed reaction is oxalate(in) = oxalate(out). The enzyme catalyses nitrate(in) = nitrate(out). It carries out the reaction sulfate(in) = sulfate(out). It catalyses the reaction hydrogencarbonate(in) = hydrogencarbonate(out). The catalysed reaction is D-gluconate(in) = D-gluconate(out). The enzyme catalyses thiocyanate(in) = thiocyanate(out). It carries out the reaction hydrogencarbonate(in) + chloride(out) = hydrogencarbonate(out) + chloride(in). Regulated by pH. Activity inhibited by all inhibitors of several anion channels and transporters, including 4,4'-Di-isothiocyanatostilbene-2,2'-disulfonic acid (DIDS), diphenylamine-2-carboxylic acid, glybenclamide and 5-Nitro-2-(3-phenylpropyl-amino)benzoic acid. In terms of biological role, acts as an anion channel mediating the transport of chloride, bromide, iodide, nitrate, sulfate, gluconate, thiocyanate and bicarbonate ions. Its permeability towards bicarbonate is weak and increases when pH is above 7. Mediates oxalate transport. Mediates thiocyanate transport in retinal pigment epithelium cells. Mediates iodide transport in the thyroid gland, playing an important role in the synthesis of thyroid hormones and the maintenance of thyroid function. Although it is an anion channel, according to PubMed:12736153 and PubMed:19723628 it has been shown to exhibit chloride-bicarbonate exchanger activity. This chain is Anion exchange transporter, found in Mus musculus (Mouse).